The following is a 64-amino-acid chain: Large ribosomal subunit protein bL35 (64 aa).

The segment covering 1-42 (MPKAKTHSGASKRFRRTGTGKIVRQKANRRHLLEHKSSKRTR) has biased composition (basic residues). The tract at residues 1–64 (MPKAKTHSGA…TKRVKSLLNG (64 aa)) is disordered.

This sequence belongs to the bacterial ribosomal protein bL35 family.

The chain is Large ribosomal subunit protein bL35 from Mycobacterium ulcerans (strain Agy99).